Reading from the N-terminus, the 285-residue chain is Hydroxyethylthiazole kinase (285 aa).

Met43 provides a ligand contact to substrate. Lys119 and Ser172 together coordinate ATP. Gly199 is a substrate binding site.

This sequence belongs to the Thz kinase family. Mg(2+) serves as cofactor.

It carries out the reaction 5-(2-hydroxyethyl)-4-methylthiazole + ATP = 4-methyl-5-(2-phosphooxyethyl)-thiazole + ADP + H(+). It participates in cofactor biosynthesis; thiamine diphosphate biosynthesis; 4-methyl-5-(2-phosphoethyl)-thiazole from 5-(2-hydroxyethyl)-4-methylthiazole: step 1/1. Its function is as follows. Catalyzes the phosphorylation of the hydroxyl group of 4-methyl-5-beta-hydroxyethylthiazole (THZ). The chain is Hydroxyethylthiazole kinase from Desulfovibrio desulfuricans (strain ATCC 27774 / DSM 6949 / MB).